We begin with the raw amino-acid sequence, 548 residues long: Membrane protein insertase YidC (548 aa).

The helical transmembrane segment at 6-26 (NLLVIALLFVSFMIWQAWEQD) threads the bilayer. A disordered region spans residues 28-58 (NPQPQQQQTTQTTTTAAGSAADQGVPASGQG). Residues 29–42 (PQPQQQQTTQTTTT) show a composition bias toward low complexity. The next 4 helical transmembrane spans lie at 350–370 (FLGNWGFSIIVITFIVRGIMY), 420–440 (LGGCFPLLIQMPIFLALYYML), 458–478 (LSAQDPYYILPILMGITMFFI), and 499–519 (PVIFTVFFLWFPSGLVLYYIV).

Belongs to the OXA1/ALB3/YidC family. Type 1 subfamily. As to quaternary structure, interacts with the Sec translocase complex via SecD. Specifically interacts with transmembrane segments of nascent integral membrane proteins during membrane integration.

The protein localises to the cell inner membrane. Required for the insertion and/or proper folding and/or complex formation of integral membrane proteins into the membrane. Involved in integration of membrane proteins that insert both dependently and independently of the Sec translocase complex, as well as at least some lipoproteins. Aids folding of multispanning membrane proteins. The protein is Membrane protein insertase YidC of Enterobacter sp. (strain 638).